A 296-amino-acid polypeptide reads, in one-letter code: Protease HtpX homolog (296 aa).

Transmembrane regions (helical) follow at residues 14–34 and 39–59; these read VVLL…VGYL and YQFG…SMIF. H143 is a Zn(2+) binding site. E144 is an active-site residue. H147 serves as a coordination point for Zn(2+). The next 2 helical transmembrane spans lie at 158-178 and 195-215; these read IAVA…RMLF and ILVL…ASLV. E224 serves as a coordination point for Zn(2+).

The protein belongs to the peptidase M48B family. The cofactor is Zn(2+).

It is found in the cell membrane. This is Protease HtpX homolog from Streptococcus agalactiae serotype III (strain NEM316).